The primary structure comprises 318 residues: Trans-prenyltransferase (318 aa).

Residues 1–21 form a helical membrane-spanning segment; it reads MLHLIYISIIVVLIIILISYT. Residues K85, R88, and H122 each coordinate isopentenyl diphosphate. Residues D129 and D135 each coordinate Mg(2+). R140 lines the dimethylallyl diphosphate pocket. Residue R141 participates in isopentenyl diphosphate binding. Dimethylallyl diphosphate contacts are provided by K216, T217, and Q254.

This sequence belongs to the FPP/GGPP synthase family. Asfivirus trans-prenyltransferase subfamily. Mg(2+) serves as cofactor.

Its subcellular location is the host endoplasmic reticulum. It is found in the host membrane. The enzyme catalyses isopentenyl diphosphate + dimethylallyl diphosphate = (2E)-geranyl diphosphate + diphosphate. The catalysed reaction is isopentenyl diphosphate + (2E)-geranyl diphosphate = (2E,6E)-farnesyl diphosphate + diphosphate. It carries out the reaction isopentenyl diphosphate + (2E,6E)-farnesyl diphosphate = (2E,6E,10E)-geranylgeranyl diphosphate + diphosphate. It catalyses the reaction isopentenyl diphosphate + (2E,6E,10E)-geranylgeranyl diphosphate = (2E,6E,10E,14E)-geranylfarnesyl diphosphate + diphosphate. Its pathway is isoprenoid biosynthesis; farnesyl diphosphate biosynthesis; farnesyl diphosphate from geranyl diphosphate and isopentenyl diphosphate: step 1/1. It functions in the pathway isoprenoid biosynthesis; geranyl diphosphate biosynthesis; geranyl diphosphate from dimethylallyl diphosphate and isopentenyl diphosphate: step 1/1. The protein operates within isoprenoid biosynthesis; geranylgeranyl diphosphate biosynthesis; geranylgeranyl diphosphate from farnesyl diphosphate and isopentenyl diphosphate: step 1/1. Functionally, trans-prenyltransferase that catalyzes the sequential condensation of isopentenyl diphosphate (IPP) with different allylic diphosphates, such as dimethylallyl diphosphate (DMAPP), geranyl diphosphate (GPP), farnesyl diphosphate (FPP) and geranylgeranyl diphosphate (GGPP), farnesyl diphosphate being the best allylic substrate. The sequence is that of Trans-prenyltransferase from African swine fever virus (isolate Tick/South Africa/Pretoriuskop Pr4/1996) (ASFV).